The sequence spans 579 residues: MSLFTRPFLRSPRQFSVARYVYWARSPALRSNLRIPSIAAASLRAYSNESKTGRDAPPDKKSKKLSNLKYITERDSLLVQTNNIFTKLKINIRWFLKKSTRPFNSDDISAFISWILVSNIFIFIFWTTTFVSLILYLINTVFAQEYLASKIGKFITKNESLSIVFESAIVPDWSSGKISFQKVFVSRRPKVSRGFTKGSQQDALQRAKLALSERILVNQQDFDNGNYTQFDLTIDQVDISLNFRKWINGKGILDEVTINGLRGVIDRTHVVWKKDDDPKNYLNVYQPGDFEISKFTMNDVLCTLYQPNGFRPFQVSIFNCDLPQLRKHWLFYDILNANNINGTYDNSMFTIHKKFRTDDQHQDPTLLWKQMTRFRVDNLDIDHLNAGIEGPFGWINEGRVNMIGDVLLPDDDAASDSLQLTEILTEIGDRLIKKAKRYTSSLPLVGPGFSPAVDEIDPNDYFIMDFSLRLYNVKAEVPLFTSGLTYINSALIRPIVGYINSHRTYIPIKCRIVKKKSDFEGSWTIYDSYLMRDLSAEAYDAFADYVADDEKRTLRLRRVGFWSLQLILQVILMSLGAIA.

The transit peptide at 1 to 47 directs the protein to the mitochondrion; sequence MSLFTRPFLRSPRQFSVARYVYWARSPALRSNLRIPSIAAASLRAYS. Over 48–114 the chain is Mitochondrial matrix; that stretch reads NESKTGRDAP…SDDISAFISW (67 aa). Residues 115 to 135 form a helical membrane-spanning segment; that stretch reads ILVSNIFIFIFWTTTFVSLIL. The Mitochondrial intermembrane portion of the chain corresponds to 136-558; that stretch reads YLINTVFAQE…DEKRTLRLRR (423 aa). Residues 559–578 traverse the membrane as a helical segment; that stretch reads VGFWSLQLILQVILMSLGAI. A579 is a topological domain (mitochondrial matrix).

It belongs to the MDM31/MDM32 family. Interacts with MDM32. Participates in a complex of about 600 kDa.

It is found in the mitochondrion inner membrane. Functionally, involved in the organization of the mitochondrial membranes and the global structure of the mitochondria. Also required for mitochondrial distribution and mobility as well as for the maintenance of mitochondrial DNA nucleoids structures. This Saccharomyces cerevisiae (strain ATCC 204508 / S288c) (Baker's yeast) protein is Mitochondrial distribution and morphology protein 31 (MDM31).